A 396-amino-acid polypeptide reads, in one-letter code: Elongation factor Tu (396 aa).

The region spanning Lys-10–Glu-206 is the tr-type G domain. The segment at Gly-19–Thr-26 is G1. Gly-19–Thr-26 is a GTP binding site. Thr-26 is a Mg(2+) binding site. The segment at Gly-60–Asn-64 is G2. The tract at residues Asp-81 to Gly-84 is G3. GTP-binding positions include Asp-81–His-85 and Asn-136–Asp-139. The tract at residues Asn-136–Asp-139 is G4. Residues Ser-174–Lys-176 form a G5 region.

This sequence belongs to the TRAFAC class translation factor GTPase superfamily. Classic translation factor GTPase family. EF-Tu/EF-1A subfamily. As to quaternary structure, monomer.

Its subcellular location is the cytoplasm. It carries out the reaction GTP + H2O = GDP + phosphate + H(+). Its function is as follows. GTP hydrolase that promotes the GTP-dependent binding of aminoacyl-tRNA to the A-site of ribosomes during protein biosynthesis. The chain is Elongation factor Tu from Burkholderia cenocepacia (strain HI2424).